Consider the following 765-residue polypeptide: 5-methyltetrahydropteroyltriglutamate--homocysteine methyltransferase (765 aa).

Residues 18-21 (REWK) and Lys-114 each bind 5-methyltetrahydropteroyltri-L-glutamate. L-homocysteine-binding positions include 437–439 (IGS) and Glu-490. Residues 437 to 439 (IGS) and Glu-490 each bind L-methionine. Residue Trp-567 coordinates 5-methyltetrahydropteroyltri-L-glutamate. An L-homocysteine-binding site is contributed by Asp-605. Asp-605 serves as a coordination point for L-methionine. A 5-methyltetrahydropteroyltri-L-glutamate-binding site is contributed by Glu-611. Zn(2+)-binding residues include His-647, Cys-649, and Glu-671. Residue His-700 is the Proton donor of the active site. Cys-732 lines the Zn(2+) pocket.

Belongs to the vitamin-B12 independent methionine synthase family. Zn(2+) is required as a cofactor.

It catalyses the reaction 5-methyltetrahydropteroyltri-L-glutamate + L-homocysteine = tetrahydropteroyltri-L-glutamate + L-methionine. Its pathway is amino-acid biosynthesis; L-methionine biosynthesis via de novo pathway; L-methionine from L-homocysteine (MetE route): step 1/1. In terms of biological role, catalyzes the transfer of a methyl group from 5-methyltetrahydrofolate to homocysteine resulting in methionine formation. The sequence is that of 5-methyltetrahydropteroyltriglutamate--homocysteine methyltransferase from Listeria welshimeri serovar 6b (strain ATCC 35897 / DSM 20650 / CCUG 15529 / CIP 8149 / NCTC 11857 / SLCC 5334 / V8).